A 149-amino-acid chain; its full sequence is Protein SprT-like (149 aa).

Residues 4–144 (TDYVKQVSLE…GLCRGKLLLV (141 aa)) form the SprT-like domain. His-64 lines the Zn(2+) pocket. Residue Glu-65 is part of the active site. His-68 serves as a coordination point for Zn(2+).

The protein belongs to the SprT family. Zn(2+) serves as cofactor.

The protein resides in the cytoplasm. This chain is Protein SprT-like, found in Streptococcus pneumoniae serotype 4 (strain ATCC BAA-334 / TIGR4).